The primary structure comprises 89 residues: Small ribosomal subunit protein uS14 (89 aa).

The protein belongs to the universal ribosomal protein uS14 family. Part of the 30S ribosomal subunit. Contacts proteins S3 and S10.

Binds 16S rRNA, required for the assembly of 30S particles and may also be responsible for determining the conformation of the 16S rRNA at the A site. This is Small ribosomal subunit protein uS14 from Akkermansia muciniphila (strain ATCC BAA-835 / DSM 22959 / JCM 33894 / BCRC 81048 / CCUG 64013 / CIP 107961 / Muc).